We begin with the raw amino-acid sequence, 235 residues long: Secretory carrier-associated membrane protein 5B (235 aa).

The Cytoplasmic segment spans residues 1-39 (MSDKPNNFPPLPRFIPLKPCFYQDFDTDIPDVHRTTAKR). A helical membrane pass occupies residues 40–60 (LYYLWMLNSITLGVNLIGCLA). At 61–67 (WLIGGGG) the chain is on the extracellular side. The helical transmembrane segment at 68-88 (ATNFGLAFLWLILFTPCSYVC) threads the bilayer. Over 89-102 (WFRPIYKAFKTDSS) the chain is Cytoplasmic. A helical membrane pass occupies residues 103–125 (FNFMAFFFTFTGQLVISIIQAVG). Over 126–148 (IPGWGVCGWIASISFFGTNVGSA) the chain is Extracellular. A helical transmembrane segment spans residues 149–169 (VVMLIPTIMFTAVAVLSFVAL). Residues 170-235 (TKVHRFYRGA…TPNYGYSNQM (66 aa)) are Cytoplasmic-facing.

This sequence belongs to the SCAMP family. SCAMP5 subfamily.

It is found in the cell membrane. The protein resides in the golgi apparatus membrane. It localises to the golgi apparatus. Its subcellular location is the trans-Golgi network membrane. The protein localises to the recycling endosome membrane. It is found in the cytoplasmic vesicle. The protein resides in the secretory vesicle. It localises to the synaptic vesicle membrane. Required for the calcium-dependent exocytosis of signal sequence-containing cytokines. Probably acts in cooperation with the SNARE machinery. This chain is Secretory carrier-associated membrane protein 5B (scamp5-b), found in Xenopus laevis (African clawed frog).